A 343-amino-acid chain; its full sequence is GTP 3',8-cyclase (343 aa).

The Radical SAM core domain occupies 19–244 (PYGRTISYLR…TDVDDSTGGP (226 aa)). Arginine 28 serves as a coordination point for GTP. Cysteine 35 and cysteine 39 together coordinate [4Fe-4S] cluster. Tyrosine 41 provides a ligand contact to S-adenosyl-L-methionine. A [4Fe-4S] cluster-binding site is contributed by cysteine 42. Arginine 77 contributes to the GTP binding site. Glycine 81 contacts S-adenosyl-L-methionine. Residue threonine 111 participates in GTP binding. An S-adenosyl-L-methionine-binding site is contributed by serine 135. Lysine 171 is a GTP binding site. S-adenosyl-L-methionine is bound at residue methionine 205. Positions 268 and 271 each coordinate [4Fe-4S] cluster. A GTP-binding site is contributed by 273 to 275 (RVR). [4Fe-4S] cluster is bound at residue cysteine 285.

This sequence belongs to the radical SAM superfamily. MoaA family. Monomer and homodimer. It depends on [4Fe-4S] cluster as a cofactor.

It carries out the reaction GTP + AH2 + S-adenosyl-L-methionine = (8S)-3',8-cyclo-7,8-dihydroguanosine 5'-triphosphate + 5'-deoxyadenosine + L-methionine + A + H(+). It functions in the pathway cofactor biosynthesis; molybdopterin biosynthesis. Its function is as follows. Catalyzes the cyclization of GTP to (8S)-3',8-cyclo-7,8-dihydroguanosine 5'-triphosphate. In Nitrobacter hamburgensis (strain DSM 10229 / NCIMB 13809 / X14), this protein is GTP 3',8-cyclase.